The primary structure comprises 243 residues: UDP-2,3-diacylglucosamine hydrolase (243 aa).

Positions 9, 11, 42, 79, and 114 each coordinate Mn(2+). Substrate is bound at residue 79–80 (NR). Substrate is bound by residues D122, S160, N164, and H195. Mn(2+) contacts are provided by H195 and H197.

Belongs to the LpxH family. It depends on Mn(2+) as a cofactor.

Its subcellular location is the cell inner membrane. It carries out the reaction UDP-2-N,3-O-bis[(3R)-3-hydroxytetradecanoyl]-alpha-D-glucosamine + H2O = 2-N,3-O-bis[(3R)-3-hydroxytetradecanoyl]-alpha-D-glucosaminyl 1-phosphate + UMP + 2 H(+). Its pathway is glycolipid biosynthesis; lipid IV(A) biosynthesis; lipid IV(A) from (3R)-3-hydroxytetradecanoyl-[acyl-carrier-protein] and UDP-N-acetyl-alpha-D-glucosamine: step 4/6. Hydrolyzes the pyrophosphate bond of UDP-2,3-diacylglucosamine to yield 2,3-diacylglucosamine 1-phosphate (lipid X) and UMP by catalyzing the attack of water at the alpha-P atom. Involved in the biosynthesis of lipid A, a phosphorylated glycolipid that anchors the lipopolysaccharide to the outer membrane of the cell. This Coxiella burnetii (strain Dugway 5J108-111) protein is UDP-2,3-diacylglucosamine hydrolase.